A 491-amino-acid polypeptide reads, in one-letter code: Acetyl-coenzyme A carboxylase carboxyl transferase subunit beta, chloroplastic (491 aa).

The CoA carboxyltransferase N-terminal domain occupies 224 to 491; it reads LWIQCENCYG…FFPLNPKKIK (268 aa). Positions 228, 231, 247, and 250 each coordinate Zn(2+). A C4-type zinc finger spans residues 228–250; sequence CENCYGLNYKKNLKSKINICEQC.

It belongs to the AccD/PCCB family. As to quaternary structure, acetyl-CoA carboxylase is a heterohexamer composed of biotin carboxyl carrier protein, biotin carboxylase and 2 subunits each of ACCase subunit alpha and ACCase plastid-coded subunit beta (accD). It depends on Zn(2+) as a cofactor.

The protein localises to the plastid. It localises to the chloroplast stroma. It carries out the reaction N(6)-carboxybiotinyl-L-lysyl-[protein] + acetyl-CoA = N(6)-biotinyl-L-lysyl-[protein] + malonyl-CoA. The protein operates within lipid metabolism; malonyl-CoA biosynthesis; malonyl-CoA from acetyl-CoA: step 1/1. Functionally, component of the acetyl coenzyme A carboxylase (ACC) complex. Biotin carboxylase (BC) catalyzes the carboxylation of biotin on its carrier protein (BCCP) and then the CO(2) group is transferred by the transcarboxylase to acetyl-CoA to form malonyl-CoA. This chain is Acetyl-coenzyme A carboxylase carboxyl transferase subunit beta, chloroplastic, found in Vitis vinifera (Grape).